We begin with the raw amino-acid sequence, 431 residues long: E3 ubiquitin-protein ligase marc-3 (431 aa).

The segment at 5-74 (NASLGPAVCR…EICKFAFKIK (70 aa)) adopts an RING-CH-type zinc-finger fold. 8 residues coordinate Zn(2+): Cys13, Cys16, Cys38, Cys40, His48, Cys51, Cys64, and Cys67. Helical transmembrane passes span 98 to 118 (PFID…GVFM) and 157 to 177 (LFLF…VSAL). Disordered regions lie at residues 267 to 289 (TSPD…FGRR) and 327 to 349 (SRAT…RDMR). Residues 273–282 (NTHHHDESRN) are compositionally biased toward basic and acidic residues.

The protein localises to the cell membrane. Its subcellular location is the endosome membrane. The enzyme catalyses S-ubiquitinyl-[E2 ubiquitin-conjugating enzyme]-L-cysteine + [acceptor protein]-L-lysine = [E2 ubiquitin-conjugating enzyme]-L-cysteine + N(6)-ubiquitinyl-[acceptor protein]-L-lysine.. It participates in protein modification; protein ubiquitination. Its function is as follows. E3 ubiquitin-protein ligase which positively regulates the fast polyspermy block during fertilization, preventing entry of more than one sperm into the oocyte. After fertilization, required in the zygote for the selective degradation of a subset of maternal membrane proteins including cav-1, chs-1 and rme-2, probably by mediating their K63-linked polyubiquitination. In Caenorhabditis elegans, this protein is E3 ubiquitin-protein ligase marc-3.